The primary structure comprises 606 residues: R-linalool synthase, chloroplastic (606 aa).

The N-terminal 51 residues, 1–51 (MCTIISVNHHHVAILSKPKVKLFHTKNKRSASINLPWSLSPSSSAASRPIS), are a transit peptide targeting the chloroplast. (2E)-geranyl diphosphate-binding residues include Arg326, Asp363, Asp367, Arg504, and Asp507. Asp363 and Asp367 together coordinate Mg(2+). The short motif at 363–367 (DDVYD) is the DDXXD motif element. Asp507, Thr511, and Glu515 together coordinate Mg(2+).

Belongs to the terpene synthase family. Tpsb subfamily. The cofactor is Mg(2+). Mn(2+) serves as cofactor.

The protein localises to the plastid. It localises to the chloroplast. The catalysed reaction is (2E)-geranyl diphosphate + H2O = (R)-linalool + diphosphate. Its pathway is secondary metabolite biosynthesis; terpenoid biosynthesis. Functionally, monoterpene synthase that catalyzes the formation of (3R)-linalool from geranyl diphosphate, but not from farnesyl diphosphate or geranylgeranyl diphosphate. This chain is R-linalool synthase, chloroplastic, found in Mentha aquatica (Water mint).